We begin with the raw amino-acid sequence, 1264 residues long: Valine--tRNA ligase (1264 aa).

S2 is subject to N-acetylserine. Residues 89–219 (GSRAAVLVQQ…YSGARPLSHQ (131 aa)) enclose the GST C-terminal domain. Residues 217–296 (SHQPGPEAPA…GEKKDVSGPM (80 aa)) form a disordered region. Basic and acidic residues-rich tracts occupy residues 234–248 (LKKE…EKFQ) and 261–275 (GEKK…KRDP). A 'HIGH' region motif is present at residues 344 to 354 (PNVTGSLHLGH). A phosphoserine mark is found at S437 and S527. The residue at position 645 (K645) is an N6-acetyllysine. A 'KMSKS' region motif is present at residues 862–866 (KMSKS). K865 provides a ligand contact to ATP.

It belongs to the class-I aminoacyl-tRNA synthetase family. As to quaternary structure, forms high-molecular-mass aggregates with elongation factor 1.

It carries out the reaction tRNA(Val) + L-valine + ATP = L-valyl-tRNA(Val) + AMP + diphosphate. With respect to regulation, can be regulated by protein kinase C-dependent phosphorylation. Catalyzes the attachment of valine to tRNA(Val). This is Valine--tRNA ligase from Homo sapiens (Human).